Reading from the N-terminus, the 149-residue chain is Ribonuclease H (149 aa).

An RNase H type-1 domain is found at M1–E143. D9, E47, D69, and D135 together coordinate Mg(2+).

This sequence belongs to the RNase H family. Monomer. The cofactor is Mg(2+).

It localises to the cytoplasm. It catalyses the reaction Endonucleolytic cleavage to 5'-phosphomonoester.. Endonuclease that specifically degrades the RNA of RNA-DNA hybrids. This is Ribonuclease H from Albidiferax ferrireducens (strain ATCC BAA-621 / DSM 15236 / T118) (Rhodoferax ferrireducens).